A 346-amino-acid chain; its full sequence is uncharacterized protein (346 aa).

The chain crosses the membrane as a helical span at residues 7-27; that stretch reads AMVILLIICGTYVLFIQYGSV. Positions 29 to 48 are disordered; the sequence is EKKSNDSEPQVSNEEAQSGK. A compositionally biased stretch (polar residues) spans 35 to 44; it reads SEPQVSNEEA. Residues 231-342 enclose the SCP domain; the sequence is LDLTNVIRVK…VDRKYYTQNF (112 aa).

It is found in the cell membrane. This is an uncharacterized protein from Bacillus subtilis (strain 168).